A 321-amino-acid chain; its full sequence is Phospholipid phosphatase-related protein type 5 (321 aa).

6 helical membrane-spanning segments follow: residues 6 to 26, 62 to 82, 122 to 142, 196 to 213, 225 to 245, and 252 to 272; these read VALI…TVML, AVPP…VIIV, FLGI…AGQV, AALS…ITST, VLCL…VAEY, and VIAG…CVVN.

This sequence belongs to the PA-phosphatase related phosphoesterase family.

The protein localises to the cell membrane. In terms of biological role, induces filopodia formation and promotes neurite growth in a CDC42-independent manner; impedes neurite growth inhibitory-mediated axonal retraction. The sequence is that of Phospholipid phosphatase-related protein type 5 from Mus musculus (Mouse).